The following is a 1017-amino-acid chain: Stereoselective keto-reductase af490 (1017 aa).

Residues 6-138 (NELSGSQVPG…GRLRMTFAGH (133 aa)) are N-terminal hotdog fold. One can recognise a PKS/mFAS DH domain in the interval 6-311 (NELSGSQVPG…MSPIAPSTEK (306 aa)). Residues 8-306 (LSGSQVPGAT…LEGLTMSPIA (299 aa)) form a dehydratase (DH) region. The tract at residues 153–311 (LRPVSISPFY…MSPIAPSTEK (159 aa)) is C-terminal hotdog fold. Residues 532 to 720 (QIRFLRAPFD…VQGGRLLIPR (189 aa)) form a ketoreductase (KR) region.

The enzyme catalyses fumagillol + NADP(+) = 5-dehydrofumagillol + NADPH + H(+). Its pathway is secondary metabolite biosynthesis; terpenoid biosynthesis. Functionally, stereoselective keto-reductase; part of the gene cluster that mediates the biosynthesis of fumagillin, a meroterpenoid that has numerous biological activities including irreversible inhibition of human type 2 methionine aminopeptidase (METAP2). Within the pathway, the keto-reductase af490 acts as a 5-dehydrofumagillol 5-reductase that stereoselectively reduces 5-keto-fumagillol to 5R-hydroxy-seco-sesquiterpene. The pathway begins with the conversion of farnesyl pyrophosphate (FPP) to beta-trans-bergamotene by the membrane-bound beta-trans-bergamotene synthase af520. The multifunctional cytochrome P450 monooxygenase af510 then converts beta-trans-bergamotene into 5-keto-demethoxyfumagillol via several oxydation steps. 5-keto-demethoxyfumagillol is then subjected to successive C-6 hydroxylation and O-methylation by the dioxygenase af480 and O-methyltransferase af390-400, respectively, to yield 5-keto-fumagillol, which is then stereoselectively reduced by the keto-reductase af490 to 5R-hydroxy-seco-sesquiterpene. The next step is the polyketide transferase af380-catalyzed transfer of a dodecapentaenoyl group synthesized by the polyketide synthase af370 onto 5R-hydroxy-seco-sesquiterpene which leads to the production of prefumagillin. Finally, oxidative cleavage by the monooxygenase af470 converts prefumagillin to fumagillin. The protein is Stereoselective keto-reductase af490 of Aspergillus fumigatus (strain ATCC MYA-4609 / CBS 101355 / FGSC A1100 / Af293) (Neosartorya fumigata).